A 144-amino-acid chain; its full sequence is Phospholipase A2 (144 aa).

Positions 1-15 (MKFLVLAALLTAGTA) are cleaved as a signal peptide. The propeptide at 16–22 (ASGVSPT) is activation peptide. Cystine bridges form between C33-C99, C49-C144, C51-C67, C66-C127, C73-C120, C83-C113, and C106-C118. Positions 50, 52, and 54 each coordinate Ca(2+). The active site involves H70. D71 contacts Ca(2+). D121 is an active-site residue.

Belongs to the phospholipase A2 family. Monomer or homodimer. The cofactor is Ca(2+). In terms of processing, activated by trypsin cleavage in the duodenum. Can also be activated by thrombin or autocatalytically.

It localises to the secreted. The catalysed reaction is a 1,2-diacyl-sn-glycero-3-phosphocholine + H2O = a 1-acyl-sn-glycero-3-phosphocholine + a fatty acid + H(+). It catalyses the reaction 1,2-ditetradecanoyl-sn-glycero-3-phosphocholine + H2O = 1-tetradecanoyl-sn-glycero-3-phosphocholine + tetradecanoate + H(+). The enzyme catalyses 1,2-dihexadecanoyl-sn-glycero-3-phosphocholine + H2O = 1-hexadecanoyl-sn-glycero-3-phosphocholine + hexadecanoate + H(+). It carries out the reaction 1-hexadecanoyl-2-(9Z-octadecenoyl)-sn-glycero-3-phosphocholine + H2O = 1-hexadecanoyl-sn-glycero-3-phosphocholine + (9Z)-octadecenoate + H(+). The catalysed reaction is 1-hexadecanoyl-2-(5Z,8Z,11Z,14Z-eicosatetraenoyl)-sn-glycero-3-phosphocholine + H2O = 1-hexadecanoyl-sn-glycero-3-phosphocholine + (5Z,8Z,11Z,14Z)-eicosatetraenoate + H(+). It catalyses the reaction 1-hexadecanoyl-2-(9Z-octadecenoyl)-sn-glycero-3-phospho-(1'-sn-glycerol) + H2O = 1-hexadecanoyl-sn-glycero-3-phospho-(1'-sn-glycerol) + (9Z)-octadecenoate + H(+). The enzyme catalyses N-hexadecanoyl-1,2-di-(9Z-octadecenoyl)-sn-glycero-3-phosphoethanolamine + H2O = N-hexadecanoyl-1-(9Z-octadecenoyl)-sn-glycero-3-phosphoethanolamine + (9Z)-octadecenoate + H(+). It carries out the reaction 1-hexadecanoyl-2-(9Z,12Z-octadecadienoyl)-sn-glycero-3-phosphoethanolamine + H2O = 1-hexadecanoyl-sn-glycero-3-phosphoethanolamine + (9Z,12Z)-octadecadienoate + H(+). The catalysed reaction is N,1-dihexadecanoyl-2-(9Z,12Z-octadecadienoyl)-sn-glycero-3-phosphoethanolamine + H2O = N,1-dihexadecanoyl-sn-glycero-3-phosphoethanolamine + (9Z,12Z)-octadecadienoate + H(+). Functionally, secretory calcium-dependent phospholipase A2 that primarily targets dietary phospholipids in the intestinal tract. Hydrolyzes the ester bond of the fatty acyl group attached at sn-2 position of phospholipids (phospholipase A2 activity) with preference for phosphatidylethanolamines and phosphatidylglycerols over phosphatidylcholines. May play a role in the biosynthesis of N-acyl ethanolamines that regulate energy metabolism and inflammation in the intestinal tract. Hydrolyzes N-acyl phosphatidylethanolamines to N-acyl lysophosphatidylethanolamines, which are further cleaved by a lysophospholipase D to release N-acyl ethanolamines. May act in an autocrine and paracrine manner. Has anti-helminth activity in a process regulated by gut microbiota. Upon helminth infection of intestinal epithelia, directly affects phosphatidylethanolamine contents in the membrane of helminth larvae, likely controlling an array of phospholipid-mediated cellular processes such as membrane fusion and cell division while providing for better immune recognition, ultimately reducing larvae integrity and infectivity. The protein is Phospholipase A2 (PLA2G1B) of Oryctolagus cuniculus (Rabbit).